Reading from the N-terminus, the 459-residue chain is Ribulose bisphosphate carboxylase large chain (459 aa).

An N6,N6,N6-trimethyllysine modification is found at Lys4. Substrate is bound by residues Asn113 and Thr163. The Proton acceptor role is filled by Lys165. Lys167 contacts substrate. Positions 191, 193, and 194 each coordinate Mg(2+). Lys191 bears the N6-carboxylysine mark. Residue His284 is the Proton acceptor of the active site. The substrate site is built by Arg285, His317, and Ser369.

It belongs to the RuBisCO large chain family. Type I subfamily. Heterohexadecamer of 8 large chains and 8 small chains; disulfide-linked. The disulfide link is formed within the large subunit homodimers. Mg(2+) serves as cofactor. In terms of processing, the disulfide bond which can form in the large chain dimeric partners within the hexadecamer appears to be associated with oxidative stress and protein turnover.

The protein localises to the plastid. Its subcellular location is the chloroplast. It catalyses the reaction 2 (2R)-3-phosphoglycerate + 2 H(+) = D-ribulose 1,5-bisphosphate + CO2 + H2O. It carries out the reaction D-ribulose 1,5-bisphosphate + O2 = 2-phosphoglycolate + (2R)-3-phosphoglycerate + 2 H(+). Its function is as follows. RuBisCO catalyzes two reactions: the carboxylation of D-ribulose 1,5-bisphosphate, the primary event in carbon dioxide fixation, as well as the oxidative fragmentation of the pentose substrate in the photorespiration process. Both reactions occur simultaneously and in competition at the same active site. The polypeptide is Ribulose bisphosphate carboxylase large chain (Morus alba (White mulberry)).